The chain runs to 62 residues: Sperm protamine P1 (62 aa).

A disordered region spans residues 1 to 62 (MARYRHSRSR…RYSRRGRRRY (62 aa)).

This sequence belongs to the protamine P1 family. Testis.

It localises to the nucleus. It is found in the chromosome. Protamines substitute for histones in the chromatin of sperm during the haploid phase of spermatogenesis. They compact sperm DNA into a highly condensed, stable and inactive complex. This chain is Sperm protamine P1 (PRM1), found in Trichosurus vulpecula (Brush-tailed possum).